Here is a 324-residue protein sequence, read N- to C-terminus: MSVTTATSGALIFSGASLLVSLFAAASIYSQVSSIWTELDNEIDSFKLLTNDIWGDMINLGAGSASNRIRRQAYGGYGATGTNAPEPQFPQGDKGPLPVPGLPFGPNVSGGSDRCQCTVENTCPTGPDGEEGEQGPDGQDGVDGVPGFDGQDCPDVEQQPSQGCFTCPQGLPGPQGSQGAPGIRGMRGARGQPGYPGRDGQPGMPGEMGPTGAPGDDGAPGASGMKGDDAEKPVGRQGQRGQPGEQGPDGEEGPAGKDAFEGPPGVEGEVGVPGYQGSAGPDGEEGPRGPSGLPGKDAEYCKCPTRDDGGNSHRAWRRKHKRVY.

The signal sequence occupies residues 1–30 (MSVTTATSGALIFSGASLLVSLFAAASIYS). The interval 119–324 (VENTCPTGPD…AWRRKHKRVY (206 aa)) is disordered. Triple-helical region stretches follow at residues 129–152 (GEEG…DGQD), 170–229 (GLPG…KGDD), and 235–294 (GRQG…SGLP). 5 stretches are compositionally biased toward low complexity: residues 136-151 (PDGQ…FDGQ), 168-181 (PQGL…QGAP), 210-223 (PTGA…PGAS), 235-246 (GRQGQRGQPGEQ), and 261-273 (EGPP…VGVP). Residues 296–311 (KDAEYCKCPTRDDGGN) are compositionally biased toward basic and acidic residues. Basic residues predominate over residues 314–324 (RAWRRKHKRVY).

This sequence belongs to the cuticular collagen family. As to quaternary structure, collagen polypeptide chains are complexed within the cuticle by disulfide bonds and other types of covalent cross-links.

Its function is as follows. Nematode cuticles are composed largely of collagen-like proteins. The cuticle functions both as an exoskeleton and as a barrier to protect the worm from its environment. Dose-dependent regulator of body length and shape. This Caenorhabditis elegans protein is Cuticle collagen lon-3 (lon-3).